A 697-amino-acid chain; its full sequence is Pentatricopeptide repeat-containing protein At2g13600 (697 aa).

PPR repeat units lie at residues 18-53, 54-84, 85-115, 116-150, 151-185, 186-216, 217-251, 252-282, 288-322, 324-349, 350-384, 385-419, 426-456, 457-491, 492-527, and 528-558; these read DSSP…GFSN, EIFI…MPQR, NIYT…MPER, DQCT…GFVL, NEYS…PFLS, DVYI…MGDR, NVVS…RVEP, DEVT…VVKN, DIIL…NVIA, TSMI…MAER, NVVS…SVCP, THYS…GFKF, DIFV…MMER, DCVS…GEKP, DHIT…GVAP, and LRDH…MPMQ. The interval 563–638 is type E motif; sequence IWGSLLAACK…QPGCSWIKIQ (76 aa). The tract at residues 639 to 669 is type E(+) motif; the sequence is GHDHVFMVKDKSHPRKKQIHSLLDILIAEMR.

The protein belongs to the PPR family. PCMP-E subfamily.

This is Pentatricopeptide repeat-containing protein At2g13600 (PCMP-E76) from Arabidopsis thaliana (Mouse-ear cress).